Here is a 247-residue protein sequence, read N- to C-terminus: uncharacterized protein (247 aa).

The next 6 helical transmembrane spans lie at 19–39 (IFFT…SIMF), 73–93 (FFTS…AFFI), 106–126 (FLSF…YFII), 155–175 (YIQF…CPLF), 196–216 (YIYF…ILSQ), and 217–237 (FFLF…SCFY).

The protein belongs to the TatC family.

The protein resides in the mitochondrion membrane. This is an uncharacterized protein from Nephroselmis olivacea (Green alga).